Here is a 126-residue protein sequence, read N- to C-terminus: Large ribosomal subunit protein eL8 (126 aa).

Belongs to the eukaryotic ribosomal protein eL8 family. In terms of assembly, part of the 50S ribosomal subunit. Probably part of the RNase P complex.

The protein localises to the cytoplasm. Multifunctional RNA-binding protein that recognizes the K-turn motif in ribosomal RNA, the RNA component of RNase P, box H/ACA, box C/D and box C'/D' sRNAs. This is Large ribosomal subunit protein eL8 from Sulfolobus acidocaldarius (strain ATCC 33909 / DSM 639 / JCM 8929 / NBRC 15157 / NCIMB 11770).